The sequence spans 229 residues: Peptidase E (229 aa).

Catalysis depends on charge relay system residues S120, D135, and H157.

It belongs to the peptidase S51 family.

It is found in the cytoplasm. It carries out the reaction Dipeptidase E catalyzes the hydrolysis of dipeptides Asp-|-Xaa. It does not act on peptides with N-terminal Glu, Asn or Gln, nor does it cleave isoaspartyl peptides.. Hydrolyzes dipeptides containing N-terminal aspartate residues. May play a role in allowing the cell to use peptide aspartate to spare carbon otherwise required for the synthesis of the aspartate family of amino acids. This chain is Peptidase E, found in Salmonella paratyphi C (strain RKS4594).